The chain runs to 368 residues: Agmatine deiminase (368 aa).

The Amidino-cysteine intermediate role is filled by Cys-357.

It belongs to the agmatine deiminase family. In terms of assembly, homodimer.

It carries out the reaction agmatine + H2O = N-carbamoylputrescine + NH4(+). It functions in the pathway amine and polyamine biosynthesis; putrescine biosynthesis via agmatine pathway; N-carbamoylputrescine from agmatine: step 1/1. Mediates the hydrolysis of agmatine into N-carbamoylputrescine in the arginine decarboxylase (ADC) pathway of putrescine biosynthesis, a basic polyamine. The protein is Agmatine deiminase of Pseudomonas fluorescens (strain ATCC BAA-477 / NRRL B-23932 / Pf-5).